A 586-amino-acid polypeptide reads, in one-letter code: Arginine--tRNA ligase (586 aa).

Residues 133–143 (ANPTGPLNIVS) carry the 'HIGH' region motif.

This sequence belongs to the class-I aminoacyl-tRNA synthetase family. In terms of assembly, monomer.

It localises to the cytoplasm. The enzyme catalyses tRNA(Arg) + L-arginine + ATP = L-arginyl-tRNA(Arg) + AMP + diphosphate. This Leptospira interrogans serogroup Icterohaemorrhagiae serovar Lai (strain 56601) protein is Arginine--tRNA ligase.